The sequence spans 459 residues: Pup--protein ligase (459 aa).

Mg(2+) is bound at residue Glu9. Position 54 (Arg54) interacts with ATP. Mg(2+) is bound at residue Tyr56. The Proton acceptor role is filled by Asp58. Glu64 is a binding site for Mg(2+). Residues Thr67 and Trp421 each coordinate ATP.

Belongs to the Pup ligase/Pup deamidase family. Pup-conjugating enzyme subfamily.

The enzyme catalyses ATP + [prokaryotic ubiquitin-like protein]-L-glutamate + [protein]-L-lysine = ADP + phosphate + N(6)-([prokaryotic ubiquitin-like protein]-gamma-L-glutamyl)-[protein]-L-lysine.. It participates in protein degradation; proteasomal Pup-dependent pathway. It functions in the pathway protein modification; protein pupylation. Functionally, catalyzes the covalent attachment of the prokaryotic ubiquitin-like protein modifier Pup to the proteasomal substrate proteins, thereby targeting them for proteasomal degradation. This tagging system is termed pupylation. The ligation reaction involves the side-chain carboxylate of the C-terminal glutamate of Pup and the side-chain amino group of a substrate lysine. In Jonesia denitrificans (strain ATCC 14870 / DSM 20603 / BCRC 15368 / CIP 55.134 / JCM 11481 / NBRC 15587 / NCTC 10816 / Prevot 55134) (Listeria denitrificans), this protein is Pup--protein ligase.